We begin with the raw amino-acid sequence, 3132 residues long: Enniatin synthetase (3132 aa).

The segment at 53–466 is condensation 1; that stretch reads ADDKQRAVGH…VEKVDMMTQE (414 aa). Residues 186–212 form a disordered region; that stretch reads NDEHPRQFETPDSSQATPEEDLQPNPS. The adenylation 1 stretch occupies residues 495–887; the sequence is SQSPNKAAVA…GRMDSQVKIR (393 aa). The segment at 994–1013 is disordered; it reads SQKTHSTPSQQSQAAISSGT. Positions 1010-1086 constitute a Carrier 1 domain; that stretch reads SSGTDTETKL…GLKAIVIGTS (77 aa). S1047 is subject to O-(pantetheine 4'-phosphoryl)serine. The interval 1105–1534 is condensation 2; that stretch reads SYAQNRMWFL…ETCISVLPLT (430 aa). The interval 1563–1960 is adenylation 2; sequence FREQAAANPE…GRMDNQFKIR (398 aa). The S-adenosyl-L-methionine-dependent N-methyltransferase stretch occupies residues 2021 to 2177; the sequence is EGWQDHFESG…YLAEVIDGLI (157 aa). 2 consecutive Carrier domains span residues 2504–2578 and 2598–2672; these read FPIS…RQGL and APRT…ESSH. O-(pantetheine 4'-phosphoryl)serine is present on residues S2538 and S2632. The tract at residues 2719–3124 is condensation 3; sequence QDVYPSTQMQ…RHVLEEVCKT (406 aa).

This sequence belongs to the NRP synthetase family. Pantetheine 4'-phosphate serves as cofactor.

It functions in the pathway antibiotic biosynthesis; enniatin biosynthesis. Functionally, nonribosomal peptide synthetase that synthesizes enniatin by coupling three D-hydroxycarboxylic acids and three L-amino acids via amide and ester bonds in an alternating fashion. Whereas ESYN1 can accept different amino acids as precursors (L-valine, L-isoleucine or L-leucine), only one species of D-hydroxycarboxylic acid can be found in natural enniatin isolates (D-hydroxyisovaleric acid, D-Hiv). D-Hiv stems from L-valine deanimation by a valine aminotransferase to 2-keto-isovaleric acid (2-Kiv), which becomes subsequently reduced by a keto-isovaleric acid reductase (KivR) to D-Hiv. The polypeptide is Enniatin synthetase (Fusarium oxysporum (Fusarium vascular wilt)).